The sequence spans 544 residues: Involucrin (544 aa).

Residues 1–520 (MSQQHTLPVT…GQVQGIQQAL (520 aa)) form a disordered region. The span at 76–90 (EQQQQPQEQKLQQQH) shows a compositional bias: low complexity. 9 stretches are compositionally biased toward basic and acidic residues: residues 96–117 (EHQK…REKQ), 124–152 (EEEK…KEQL), 202–234 (QLKH…KQSE), 252–271 (QLKH…HQEG), 283–297 (KHLE…HPEQ), 304–347 (QLEE…HPEQ), 354–411 (QLEE…REEQ), 423–437 (KHLE…HPEQ), and 462–476 (KHLE…HPEQ). The span at 477-494 (QEGQLKPQEQQEGQLKGL) shows a compositional bias: low complexity.

This sequence belongs to the involucrin family. As to quaternary structure, directly or indirectly cross-linked to cornifelin (CNFN). Post-translationally, substrate of transglutaminase. Specific glutamines or lysines are cross-linked to keratins, desmoplakin and to inter involucrin molecules. In terms of tissue distribution, keratinocytes of epidermis and other stratified squamous epithelia.

The protein localises to the cytoplasm. Its function is as follows. Part of the insoluble cornified cell envelope (CE) of stratified squamous epithelia. This is Involucrin (IVL) from Aotus trivirgatus (Three-striped night monkey).